The chain runs to 99 residues: Putative pterin-4-alpha-carbinolamine dehydratase (99 aa).

The protein belongs to the pterin-4-alpha-carbinolamine dehydratase family.

The enzyme catalyses (4aS,6R)-4a-hydroxy-L-erythro-5,6,7,8-tetrahydrobiopterin = (6R)-L-erythro-6,7-dihydrobiopterin + H2O. The sequence is that of Putative pterin-4-alpha-carbinolamine dehydratase from Bradyrhizobium sp. (strain BTAi1 / ATCC BAA-1182).